Reading from the N-terminus, the 115-residue chain is NADH-ubiquinone oxidoreductase chain 3 (115 aa).

Helical transmembrane passes span 3 to 23, 55 to 75, and 84 to 104; these read FVLI…ITFW, FFLV…LLPL, and LPLM…SLAY.

Belongs to the complex I subunit 3 family. As to quaternary structure, core subunit of respiratory chain NADH dehydrogenase (Complex I) which is composed of 45 different subunits. Interacts with TMEM186. Interacts with TMEM242.

The protein localises to the mitochondrion inner membrane. It catalyses the reaction a ubiquinone + NADH + 5 H(+)(in) = a ubiquinol + NAD(+) + 4 H(+)(out). Core subunit of the mitochondrial membrane respiratory chain NADH dehydrogenase (Complex I) which catalyzes electron transfer from NADH through the respiratory chain, using ubiquinone as an electron acceptor. Essential for the catalytic activity of complex I. This is NADH-ubiquinone oxidoreductase chain 3 from Pan troglodytes (Chimpanzee).